We begin with the raw amino-acid sequence, 121 residues long: MALNIENIIAEIKEASILELNDLVKAIEEEFGVTAAAPVAAVAAGGAEEATKDSFDVELTAAGDKKVGVIKAVREITGLGLKEAKGLVDGAPANIKEGVAAAEAEEIKAKLEEAGATITLK.

Belongs to the bacterial ribosomal protein bL12 family. Homodimer. Part of the ribosomal stalk of the 50S ribosomal subunit. Forms a multimeric L10(L12)X complex, where L10 forms an elongated spine to which 2 to 4 L12 dimers bind in a sequential fashion. Binds GTP-bound translation factors.

Functionally, forms part of the ribosomal stalk which helps the ribosome interact with GTP-bound translation factors. Is thus essential for accurate translation. The protein is Large ribosomal subunit protein bL12 of Streptococcus uberis (strain ATCC BAA-854 / 0140J).